The chain runs to 515 residues: Probable cytochrome P450 6d4 (515 aa).

C457 is a heme binding site.

This sequence belongs to the cytochrome P450 family. Heme serves as cofactor.

It localises to the endoplasmic reticulum membrane. The protein resides in the microsome membrane. In terms of biological role, may be involved in the metabolism of insect hormones and in the breakdown of synthetic insecticides. This Drosophila melanogaster (Fruit fly) protein is Probable cytochrome P450 6d4 (Cyp6d4).